We begin with the raw amino-acid sequence, 671 residues long: Protein cereblon (671 aa).

Positions 1 to 11 are enriched in acidic residues; sequence MDGEEAADIDE. Disordered regions lie at residues 1-59, 104-130, and 150-187; these read MDGE…VDGD, LTGT…PAQP, and GHNV…DAEA. Composition is skewed to low complexity over residues 39–51 and 105–115; these read QQQQ…SSGE and TGTTTPTPTAP. Positions 162 to 173 are enriched in polar residues; it reads SISSRHSGSDMS. The region spanning 309–537 is the Lon N-terminal domain; it reads RMLIFMHQHI…IIGSTLKQES (229 aa). Positions 536 to 645 constitute a CULT domain; it reads ESLFYCRYCN…LAGSSVRIGK (110 aa). The Zn(2+) site is built by Cys541, Cys544, Cys610, and Cys613.

Belongs to the CRBN family. Likely a component of a DCX (DDB1-CUL4-X-box) protein ligase complex. May interact with pic/DDB1. Ubiquitinated.

The protein localises to the nucleus. Its pathway is protein modification; protein ubiquitination. In terms of biological role, substrate recognition component of a DCX (DDB1-CUL4-X-box) E3 protein ligase complex that mediates the ubiquitination and subsequent proteasomal degradation of target proteins. Has an essential role in mediating growth by negatively regulating insulin signaling. It also has a role in maintaining presynaptic function in the neuromuscular junction synapses of third-instar larvae. This is Protein cereblon from Drosophila grimshawi (Hawaiian fruit fly).